Here is a 244-residue protein sequence, read N- to C-terminus: 7-cyano-7-deazaguanine synthase (244 aa).

14 to 24 (FSGGQDSATCV) contributes to the ATP binding site. Zn(2+) contacts are provided by cysteine 202, cysteine 217, cysteine 220, and cysteine 223.

Belongs to the QueC family. It depends on Zn(2+) as a cofactor.

It catalyses the reaction 7-carboxy-7-deazaguanine + NH4(+) + ATP = 7-cyano-7-deazaguanine + ADP + phosphate + H2O + H(+). Its pathway is purine metabolism; 7-cyano-7-deazaguanine biosynthesis. Its function is as follows. Catalyzes the ATP-dependent conversion of 7-carboxy-7-deazaguanine (CDG) to 7-cyano-7-deazaguanine (preQ(0)). The protein is 7-cyano-7-deazaguanine synthase of Burkholderia multivorans (strain ATCC 17616 / 249).